The sequence spans 273 residues: Type IV secretion system protein PtlF (273 aa).

Residues 1-20 (MMAARMMAAGLAATALSAHA) form the signal peptide.

It belongs to the TrbG/VirB9 family. Forms a complex with PtlI.

The protein localises to the cell outer membrane. Its function is as follows. Component of the type IV secretion system ptl required for secretion of assembled pertussis toxin (PTX) through the outer membrane. In Bordetella pertussis (strain Tohama I / ATCC BAA-589 / NCTC 13251), this protein is Type IV secretion system protein PtlF (ptlF).